A 133-amino-acid polypeptide reads, in one-letter code: Large ribosomal subunit protein bL17 (133 aa).

The protein belongs to the bacterial ribosomal protein bL17 family. In terms of assembly, part of the 50S ribosomal subunit. Contacts protein L32.

This Alteromonas mediterranea (strain DSM 17117 / CIP 110805 / LMG 28347 / Deep ecotype) protein is Large ribosomal subunit protein bL17.